Here is a 51-residue protein sequence, read N- to C-terminus: UPF0181 protein HAPS_0710 (51 aa).

This sequence belongs to the UPF0181 family.

This is UPF0181 protein HAPS_0710 from Glaesserella parasuis serovar 5 (strain SH0165) (Haemophilus parasuis).